A 433-amino-acid polypeptide reads, in one-letter code: Inorganic triphosphatase (433 aa).

The region spanning A2–N202 is the CYTH domain. One can recognise a CHAD domain in the interval K218–R433.

It catalyses the reaction triphosphate + H2O = phosphate + diphosphate. Inhibited by calcium ion and activated by magnesium ion. Functionally, involved in the hydrolysis of the beta-gamma-phosphoanhydride linkage of triphosphate-containing substrates (inorganic or nucleoside-linked). Catalyzes the hydrolysis of inorganic triphosphate (PPPi), which could be cytotoxic because of its high affinity for calcium ion, thereby interfering with calcium signaling. It also hydrolyzes slowly thiamine triphosphate (ThTP). YgiF is a specific PPPase, but it contributes only marginally to the total PPPase activity in E.coli, where the main enzyme responsible for hydrolysis of PPPi is inorganic pyrophosphatase (PPase). This is Inorganic triphosphatase (ygiF) from Escherichia coli (strain K12).